A 256-amino-acid polypeptide reads, in one-letter code: Thiazole synthase (256 aa).

Lys-95 (schiff-base intermediate with DXP) is an active-site residue. Residues Gly-156, Ala-182–Gly-183, and Asn-204–Thr-205 contribute to the 1-deoxy-D-xylulose 5-phosphate site.

This sequence belongs to the ThiG family. As to quaternary structure, homotetramer. Forms heterodimers with either ThiH or ThiS.

It localises to the cytoplasm. It carries out the reaction [ThiS sulfur-carrier protein]-C-terminal-Gly-aminoethanethioate + 2-iminoacetate + 1-deoxy-D-xylulose 5-phosphate = [ThiS sulfur-carrier protein]-C-terminal Gly-Gly + 2-[(2R,5Z)-2-carboxy-4-methylthiazol-5(2H)-ylidene]ethyl phosphate + 2 H2O + H(+). Its pathway is cofactor biosynthesis; thiamine diphosphate biosynthesis. Its function is as follows. Catalyzes the rearrangement of 1-deoxy-D-xylulose 5-phosphate (DXP) to produce the thiazole phosphate moiety of thiamine. Sulfur is provided by the thiocarboxylate moiety of the carrier protein ThiS. In vitro, sulfur can be provided by H(2)S. The chain is Thiazole synthase from Salmonella enteritidis PT4 (strain P125109).